Here is a 212-residue protein sequence, read N- to C-terminus: Peptide methionine sulfoxide reductase MsrA (212 aa).

C51 is a catalytic residue.

Belongs to the MsrA Met sulfoxide reductase family.

It carries out the reaction L-methionyl-[protein] + [thioredoxin]-disulfide + H2O = L-methionyl-(S)-S-oxide-[protein] + [thioredoxin]-dithiol. The catalysed reaction is [thioredoxin]-disulfide + L-methionine + H2O = L-methionine (S)-S-oxide + [thioredoxin]-dithiol. Its function is as follows. Has an important function as a repair enzyme for proteins that have been inactivated by oxidation. Catalyzes the reversible oxidation-reduction of methionine sulfoxide in proteins to methionine. The protein is Peptide methionine sulfoxide reductase MsrA of Vibrio parahaemolyticus serotype O3:K6 (strain RIMD 2210633).